The sequence spans 706 residues: Melanopsin (706 aa).

At Met-1–Tyr-86 the chain is on the extracellular side. 3 N-linked (GlcNAc...) asparagine glycosylation sites follow: Asn-12, Asn-64, and Asn-69. Residues Ile-87–Val-107 form a helical membrane-spanning segment. Over Tyr-108 to Asn-121 the chain is Cytoplasmic. The chain crosses the membrane as a helical span at residues Phe-122–Phe-142. Over Ala-143–Glu-159 the chain is Extracellular. A disulfide bridge connects residues Cys-158 and Cys-236. A helical transmembrane segment spans residues Leu-160–Ser-180. Over Met-181–Arg-201 the chain is Cytoplasmic. Residues Val-202–Phe-222 traverse the membrane as a helical segment. At Gly-223–His-248 the chain is on the extracellular side. The helical transmembrane segment at Ile-249–Cys-269 threads the bilayer. Residues Tyr-270–Lys-314 are Cytoplasmic-facing. Residues Ile-315–Ala-335 form a helical membrane-spanning segment. Residues Leu-336–Ser-351 are Extracellular-facing. Residues Ile-352–Tyr-372 form a helical membrane-spanning segment. Lys-358 is modified (N6-(retinylidene)lysine). Topologically, residues Pro-373–Leu-706 are cytoplasmic. Disordered stretches follow at residues Ser-393 to Thr-446, Arg-571 to Thr-599, and Gln-630 to Glu-658. Composition is skewed to low complexity over residues Gln-404–Ala-418 and Ser-426–Ser-442. Positions Arg-571–Arg-593 are enriched in basic and acidic residues. The span at Gly-645 to Glu-658 shows a compositional bias: acidic residues.

This sequence belongs to the G-protein coupled receptor 1 family. Opsin subfamily. As to expression, expressed in Joseph cells and photoreceptor cells of the dorsal ocelli.

The protein resides in the cell membrane. Functionally, photoreceptor implicated in non-image-forming responses to light. Photoisomerizes covalently bound all-trans retinal back to 11-cis retinal. Most likely coupled to the G(q) signaling cascade. This is Melanopsin from Branchiostoma belcheri (Amphioxus).